Consider the following 255-residue polypeptide: uncharacterized protein (255 aa).

The first 28 residues, 1 to 28 (MFKLNFKNNYKVLTLLFSLTLSMFVSNA), serve as a signal peptide directing secretion. N-linked (GlcNAc...) asparagine glycans are attached at residues Asn38, Asn61, and Asn83.

The protein resides in the secreted. This is an uncharacterized protein from Dictyostelium discoideum (Social amoeba).